A 797-amino-acid polypeptide reads, in one-letter code: Phenylalanine--tRNA ligase beta subunit (797 aa).

The tRNA-binding domain occupies 40–154; that stretch reads MEGLSKLVVG…ADAKVGDSIF (115 aa). The 76-residue stretch at 407–482 folds into the B5 domain; it reads PILPKVSITL…RIYGYDNLPS (76 aa). The Mg(2+) site is built by D460, D466, E469, and E470. The 94-residue stretch at 704 to 797 folds into the FDX-ACB domain; sequence PKVQAVHRDI…LVEKLDIEIR (94 aa).

The protein belongs to the phenylalanyl-tRNA synthetase beta subunit family. Type 1 subfamily. Tetramer of two alpha and two beta subunits. Requires Mg(2+) as cofactor.

It is found in the cytoplasm. The catalysed reaction is tRNA(Phe) + L-phenylalanine + ATP = L-phenylalanyl-tRNA(Phe) + AMP + diphosphate + H(+). The protein is Phenylalanine--tRNA ligase beta subunit of Lactococcus lactis subsp. lactis (strain IL1403) (Streptococcus lactis).